The primary structure comprises 228 residues: D-lyxose/D-mannose isomerase (228 aa).

4 residues coordinate Mn(2+): His103, His105, Glu110, and His171.

This sequence belongs to the D-lyxose ketol-isomerase family. Homodimer. Mn(2+) is required as a cofactor.

The catalysed reaction is D-lyxose = D-xylulose. It catalyses the reaction D-mannose = D-fructose. Functionally, sugar isomerase that catalyzes the reversible isomerization of D-lyxose to D-xylulose, and D-mannose to D-fructose. Shows optimum activity using D-lyxose as substrate, but can also effectively catalyze the isomerization between D-fructose and D-mannose. Shows lower activity with L-gulose, D-talose and L-ribose. In Serratia proteamaculans, this protein is D-lyxose/D-mannose isomerase.